The sequence spans 316 residues: Phosphatidylinositol mannoside acyltransferase (316 aa).

Residue His137 is the Proton acceptor of the active site. His137 and Arg175 together coordinate hexadecanoyl-CoA. Glu211 is a catalytic residue. Glu240 contributes to the hexadecanoyl-CoA binding site.

This sequence belongs to the LpxL/LpxM/LpxP family.

It is found in the cell inner membrane. The catalysed reaction is a 2,6-O-bis(alpha-D-mannopyranosyl)-1-phosphatidyl-1D-myo-inositol + an acyl-CoA = a 2-O-(alpha-D-mannosyl)-6-O-(6-O-acyl-alpha-D-mannosyl)-1-phosphatidyl-1D-myo-inositol + CoA. It carries out the reaction a 1,2-diacyl-sn-glycero-3-phospho-[alpha-D-mannopyranosyl-(1&lt;-&gt;6)-D-myo-inositol] + an acyl-CoA = a 1,2-diacyl-sn-glycero-3-phospho-[alpha-D-6-acyl-mannopyranosyl-(1&lt;-&gt;6)-D-myo-inositol] + CoA. It functions in the pathway phospholipid metabolism; phosphatidylinositol metabolism. In terms of biological role, catalyzes the transfer of a palmitoyl moiety from palmitoyl-CoA to the 6-position of the mannose ring linked to the 2-position of myo-inositol in phosphatidyl-myo-inositol monomannoside (PIM1) or dimannoside (PIM2). The sequence is that of Phosphatidylinositol mannoside acyltransferase from Mycobacterium tuberculosis (strain CDC 1551 / Oshkosh).